A 490-amino-acid polypeptide reads, in one-letter code: Argininosuccinate lyase (490 aa).

This sequence belongs to the lyase 1 family. Argininosuccinate lyase subfamily.

The protein localises to the cytoplasm. It catalyses the reaction 2-(N(omega)-L-arginino)succinate = fumarate + L-arginine. The protein operates within amino-acid biosynthesis; L-arginine biosynthesis; L-arginine from L-ornithine and carbamoyl phosphate: step 3/3. This Bifidobacterium longum subsp. infantis (strain ATCC 15697 / DSM 20088 / JCM 1222 / NCTC 11817 / S12) protein is Argininosuccinate lyase.